The chain runs to 144 residues: Austinoid biosynthesis cluster protein S (144 aa).

Belongs to the trt14 isomerase family. As to quaternary structure, homodimer.

It functions in the pathway secondary metabolite biosynthesis; terpenoid biosynthesis. In terms of biological role, part of the gene cluster that mediates the biosynthesis of calidodehydroaustin, a fungal meroterpenoid. The first step of the pathway is the synthesis of 3,5-dimethylorsellinic acid by the polyketide synthase ausA. 3,5-dimethylorsellinic acid is then prenylated by the polyprenyl transferase ausN. Further epoxidation by the FAD-dependent monooxygenase ausM and cyclization by the probable terpene cyclase ausL lead to the formation of protoaustinoid A. Protoaustinoid A is then oxidized to spiro-lactone preaustinoid A3 by the combined action of the FAD-binding monooxygenases ausB and ausC, and the dioxygenase ausE. Acid-catalyzed keto-rearrangement and ring contraction of the tetraketide portion of preaustinoid A3 by ausJ lead to the formation of preaustinoid A4. The aldo-keto reductase ausK, with the help of ausH, is involved in the next step by transforming preaustinoid A4 into isoaustinone which is in turn hydroxylated by the P450 monooxygenase ausI to form austinolide. The cytochrome P450 monooxygenase ausG modifies austinolide to austinol. Austinol is further acetylated to austin by the O-acetyltransferase ausP, which spontaneously changes to dehydroaustin. The cytochrome P450 monooxygenase ausR then converts dehydroaustin is into 7-dehydrodehydroaustin. The hydroxylation catalyzed by ausR permits the O-acetyltransferase ausQ to add an additional acetyl group to the molecule, leading to the formation of acetoxydehydroaustin. The short chain dehydrogenase ausT catalyzes the reduction of the double bond present between carbon atoms 1 and 2 to convert 7-dehydrodehydroaustin into 1,2-dihydro-7-hydroxydehydroaustin. AusQ catalyzes not only an acetylation reaction but also the addition of the PKS ausV diketide product to 1,2-dihydro-7-hydroxydehydroaustin, forming precalidodehydroaustin. Finally, the iron/alpha-ketoglutarate-dependent dioxygenase converts precalidodehydroaustin into calidodehydroaustin. AusS is necessary for austinoids production and may play a possible function as a regulator. Functionally, may play a possible function as a regulator. This is Austinoid biosynthesis cluster protein S from Aspergillus calidoustus.